Here is a 424-residue protein sequence, read N- to C-terminus: Deoxyguanosinetriphosphate triphosphohydrolase-like protein (424 aa).

A disordered region spans residues 1–24 (MYPYSDADAFRRHPERAKSSQLRT). Residues 8 to 18 (DAFRRHPERAK) are compositionally biased toward basic and acidic residues. Positions 67–217 (RLTHSLEVAQ…MDFSDDIAYS (151 aa)) constitute an HD domain.

The protein belongs to the dGTPase family. Type 2 subfamily.

The chain is Deoxyguanosinetriphosphate triphosphohydrolase-like protein from Corynebacterium glutamicum (strain R).